Consider the following 969-residue polypeptide: Alanine--tRNA ligase (969 aa).

A mitochondrion-targeting transit peptide spans 1–8 (MIKTLLRR). Residues H616, H620, C735, and H739 each contribute to the Zn(2+) site.

Belongs to the class-II aminoacyl-tRNA synthetase family. As to quaternary structure, monomer. Requires Zn(2+) as cofactor.

It is found in the mitochondrion. It localises to the cytoplasm. It carries out the reaction tRNA(Ala) + L-alanine + ATP = L-alanyl-tRNA(Ala) + AMP + diphosphate. Functionally, catalyzes the attachment of alanine to tRNA(Ala) in a two-step reaction: alanine is first activated by ATP to form Ala-AMP and then transferred to the acceptor end of tRNA(Ala). Also edits incorrectly charged tRNA(Ala) via its editing domain. The chain is Alanine--tRNA ligase from Candida albicans (strain SC5314 / ATCC MYA-2876) (Yeast).